A 254-amino-acid polypeptide reads, in one-letter code: CRISPR-associated endonuclease Cas1 (254 aa).

Positions 78, 146, and 161 each coordinate Mn(2+).

This sequence belongs to the CRISPR-associated endonuclease Cas1 family. Homodimer, forms a heterotetramer with a Cas2 homodimer. Mg(2+) is required as a cofactor. It depends on Mn(2+) as a cofactor.

CRISPR (clustered regularly interspaced short palindromic repeat), is an adaptive immune system that provides protection against mobile genetic elements (viruses, transposable elements and conjugative plasmids). CRISPR clusters contain spacers, sequences complementary to antecedent mobile elements, and target invading nucleic acids. CRISPR clusters are transcribed and processed into CRISPR RNA (crRNA). Acts as a dsDNA endonuclease. Involved in the integration of spacer DNA into the CRISPR cassette. The chain is CRISPR-associated endonuclease Cas1 from Leptospira interrogans serogroup Icterohaemorrhagiae serovar Lai (strain 56601).